We begin with the raw amino-acid sequence, 251 residues long: Ditrans,polycis-undecaprenyl-diphosphate synthase ((2E,6E)-farnesyl-diphosphate specific) (251 aa).

The active site involves Asp20. Asp20 serves as a coordination point for Mg(2+). Residues 21–24, Trp25, Arg33, His37, and 65–67 contribute to the substrate site; these read GNGR and SSE. Asn68 functions as the Proton acceptor in the catalytic mechanism. Residues Trp69, Arg71, Arg188, and 194–196 contribute to the substrate site; that span reads RIS. Residue Glu207 participates in Mg(2+) binding.

The protein belongs to the UPP synthase family. Homodimer. Mg(2+) is required as a cofactor.

It catalyses the reaction 8 isopentenyl diphosphate + (2E,6E)-farnesyl diphosphate = di-trans,octa-cis-undecaprenyl diphosphate + 8 diphosphate. Its function is as follows. Catalyzes the sequential condensation of isopentenyl diphosphate (IPP) with (2E,6E)-farnesyl diphosphate (E,E-FPP) to yield (2Z,6Z,10Z,14Z,18Z,22Z,26Z,30Z,34E,38E)-undecaprenyl diphosphate (di-trans,octa-cis-UPP). UPP is the precursor of glycosyl carrier lipid in the biosynthesis of bacterial cell wall polysaccharide components such as peptidoglycan and lipopolysaccharide. This Vibrio vulnificus (strain CMCP6) protein is Ditrans,polycis-undecaprenyl-diphosphate synthase ((2E,6E)-farnesyl-diphosphate specific).